A 330-amino-acid chain; its full sequence is Aspartate--ammonia ligase (330 aa).

This sequence belongs to the class-II aminoacyl-tRNA synthetase family. AsnA subfamily.

Its subcellular location is the cytoplasm. The catalysed reaction is L-aspartate + NH4(+) + ATP = L-asparagine + AMP + diphosphate + H(+). The protein operates within amino-acid biosynthesis; L-asparagine biosynthesis; L-asparagine from L-aspartate (ammonia route): step 1/1. The protein is Aspartate--ammonia ligase of Escherichia coli O45:K1 (strain S88 / ExPEC).